The chain runs to 310 residues: Protein TIFY 6A (310 aa).

Residues 141–176 (SKPLPPQLTIFYAGSVLVYQDIAPEKAQAIMLLAGN) enclose the Tify domain. Residues 259–284 (PQTRKASLARFLEKRKERVINVSPYY) carry the Jas motif. The Nuclear localization signal motif lies at 261 to 268 (TRKASLAR).

This sequence belongs to the TIFY/JAZ family. As to quaternary structure, homo- and heterodimer. Interacts with MYC2, AFPH2/NINJA, TIFY10A/JAZ1, TIFY6B/JAZ3, TIFY5A/JAZ8, TIFY9/JAZ10 and TIFY3A/JAZ11. Interacts with RHD6 and RSL1. In terms of processing, ubiquitinated. Targeted for degradation by the SCF(COI1) E3 ubiquitin ligase-proteasome pathway during jasmonate signaling.

The protein localises to the nucleus. In terms of biological role, repressor of jasmonate responses. Interacts with and suppresses RHD6 and RSL1 transcription factor activities to negatively regulate jasmonate-stimulated root hair development. This Arabidopsis thaliana (Mouse-ear cress) protein is Protein TIFY 6A (TIFY6A).